A 239-amino-acid polypeptide reads, in one-letter code: Mannose-binding protein A (239 aa).

Positions 1 to 18 (MLLLPLLPVLLCVVSVSS) are cleaved as a signal peptide. A disordered region spans residues 35–88 (ACGRDGRDGPKGEKGEPGQGLRGLQGPPGKLGPPGSVGSPGSPGPKGQKGDHGD). A Collagen-like domain is found at 37–89 (GRDGRDGPKGEKGEPGQGLRGLQGPPGKLGPPGSVGSPGSPGPKGQKGDHGDN). Positions 38-50 (RDGRDGPKGEKGE) are enriched in basic and acidic residues. Residue P44 is modified to 4-hydroxyproline. Residues K45 and K48 each carry the 5-hydroxylysine modification. O-linked (Gal...) hydroxylysine glycosylation is found at K45 and K48. 4-hydroxyproline is present on residues P51, P62, P68, P74, and P79. Low complexity predominate over residues 58 to 74 (LQGPPGKLGPPGSVGSP). K80 and K83 each carry 5-hydroxylysine. O-linked (Gal...) hydroxylysine glycosylation is found at K80 and K83. Positions 144-239 (SLCTELQGTV…SFKAVCEFPA (96 aa)) constitute a C-type lectin domain. 2 cysteine pairs are disulfide-bonded: C146-C235 and C213-C227. Ca(2+)-binding residues include D179, E183, E203, N205, E211, D212, N223, and D224. The calcium-dependent carbohydrate binding stretch occupies residues 203-211 (EPNNHGSGE).

In terms of assembly, homotrimer. Forms higher oligomeric complexes formed by the association of two, three or more homotrimers. Oligomerization occurs in the endoplasmic reticulum. Interacts with MASP1 and MASP2. Post-translationally, hydroxylated on lysine and proline residues within the collagen-like domain. O-glycosylated. O-linked glycans on hydroxylysine residues consist of Glc-Gal disaccharides bound to the oxygen atom of post-translationally added hydroxyl groups. In terms of tissue distribution, detected in liver and blood serum (at protein level). Detected in liver.

The protein localises to the secreted. Its function is as follows. Calcium-dependent lectin. Plays a role in the innate immune response by binding mannose, fucose and N-acetylglucosamine moieties on different microorganisms and mediating activation of the lectin complement pathway. Binds to late apoptotic cells, as well as to apoptotic blebs and to necrotic cells, but not to early apoptotic cells, facilitating their uptake by macrophages. This is Mannose-binding protein A (Mbl1) from Mus musculus (Mouse).